We begin with the raw amino-acid sequence, 55 residues long: Neurotoxin X-29S (55 aa).

A signal peptide spans 1–23; sequence MKIFFAVLVILVLFSMLIWTAYG. Cystine bridges form between Cys30–Cys45, Cys36–Cys50, and Cys39–Cys53.

Expressed by the venom gland.

It localises to the secreted. The chain is Neurotoxin X-29S from Olivierus martensii (Manchurian scorpion).